We begin with the raw amino-acid sequence, 271 residues long: MEAAAEPGNLAGVRHIILVLSGKGGVGKSTISTELALALRHAGKKVGILDVDLCGPSIPRMLGAQGRAVHQCDRGWAPVFLDREQSISLMSVGFLLEKPDEAVVWRGPKKNALIKQFVSDVAWGELDYLVVDTPPGTSDEHMATIEALRPYQPLGALVVTTPQAVSVGDVRRELTFCRKTGLRVMGIVENMSGFTCPHCTECTSVFSRGGGEELAQLAGVPFLGSVPLDPALMRTLEEGHDFIQEFPGSPAFAALTSIAQKILDATPACLP.

M1 carries the N-acetylmethionine modification. 22–29 provides a ligand contact to ATP; that stretch reads GKGGVGKS. [4Fe-4S] cluster is bound by residues C196 and C199.

The protein belongs to the Mrp/NBP35 ATP-binding proteins family. NUBP2/CFD1 subfamily. In terms of assembly, heterotetramer of 2 NUBP1 and 2 NUBP2 chains. Interacts with KIFC1. Interacts with NUBP1. It depends on [4Fe-4S] cluster as a cofactor. Widely expressed with highest expression in skeletal muscle.

Its subcellular location is the nucleus. The protein localises to the cytoplasm. It localises to the cytoskeleton. The protein resides in the microtubule organizing center. It is found in the centrosome. Its subcellular location is the cilium axoneme. The protein localises to the centriole. Its function is as follows. Component of the cytosolic iron-sulfur (Fe/S) protein assembly (CIA) machinery. Required for maturation of extramitochondrial Fe-S proteins. The NUBP1-NUBP2 heterotetramer forms a Fe-S scaffold complex, mediating the de novo assembly of an Fe-S cluster and its transfer to target apoproteins. Negatively regulates cilium formation and structure. The polypeptide is Cytosolic Fe-S cluster assembly factor NUBP2 (Homo sapiens (Human)).